Here is a 147-residue protein sequence, read N- to C-terminus: Large ribosomal subunit protein uL15 (147 aa).

Residues 20 to 54 (GRGIGSGKGKTSGKGHKGQKARGTGKVHPWFEGGQ) are disordered. The span at 30–44 (TSGKGHKGQKARGTG) shows a compositional bias: basic residues.

Belongs to the universal ribosomal protein uL15 family. In terms of assembly, part of the 50S ribosomal subunit.

Functionally, binds to the 23S rRNA. This chain is Large ribosomal subunit protein uL15, found in Thermosipho africanus (strain TCF52B).